A 1033-amino-acid chain; its full sequence is Potassium-transporting ATPase alpha chain 2 (1033 aa).

Residues 1–96 (MRRKTLEIYS…NALSPPKQTP (96 aa)) lie on the Cytoplasmic side of the membrane. Residues 97–117 (EIIKFLKQMIGGFSILLWVGA) form a helical membrane-spanning segment. The Lumenal segment spans residues 118–140 (ILCWIAYGIQYASNQSGSLDNVY). A helical membrane pass occupies residues 141 to 161 (LGVVLALVVILTGIFAYYQEA). Residues 162-297 (KSTNIMSSFS…NEKTPIATEI (136 aa)) are Cytoplasmic-facing. A helical membrane pass occupies residues 298–317 (EHFVHIVAGVAVSIGILFFI). Over 318–329 (IAVSLKYRVLDS) the chain is Lumenal. A helical transmembrane segment spans residues 330 to 347 (IIFLIGIIVANVPEGLLA). At 348 to 781 (TVTVTLSLTA…EEGRLIFDNL (434 aa)) the chain is on the cytoplasmic side. The active-site 4-aspartylphosphate intermediate is Asp385. Mg(2+)-binding residues include Asp726 and Asp730. The chain crosses the membrane as a helical span at residues 782 to 801 (KKTIAYTLTKNIAELCPFLV). The Lumenal segment spans residues 802 to 811 (YIIVGLPLPI). Residues 812–832 (GTITILFIDLGTDIIPSIALA) form a helical membrane-spanning segment. Over 833–852 (YEKVESDIMNRKPRHKKKDR) the chain is Cytoplasmic. A helical membrane pass occupies residues 853–875 (LVNHQLAIYSYLHIGLMQALGAF). The Lumenal portion of the chain corresponds to 876-927 (LVYFTVYAQQGFWPTSLIQLRVKWEQDYVNDLEDSYGQQWTRYQRKYLEWTG). The chain crosses the membrane as a helical span at residues 928–947 (YTAFFVGIMVQQIADLIIRK). The Cytoplasmic segment spans residues 948-961 (TRRNSIFQQGLFRN). At Ser952 the chain carries Phosphoserine; by PKA. A helical membrane pass occupies residues 962–980 (KVIWVGITSQIIVALILSC). Topologically, residues 981–995 (GLGSITALNFTMLRV) are lumenal. The helical transmembrane segment at 996–1016 (QYWFVAVPHAILIWVYDEVRK) threads the bilayer. Residues 1017 to 1033 (LFLRLYPGSWWDKNMYY) lie on the Cytoplasmic side of the membrane.

Belongs to the cation transport ATPase (P-type) (TC 3.A.3) family. Type IIC subfamily. In terms of assembly, composed of two subunits: alpha (catalytic) and beta. In terms of tissue distribution, found in skin, kidney and distal colon.

The protein localises to the membrane. It carries out the reaction K(+)(out) + ATP + H2O + H(+)(in) = K(+)(in) + ADP + phosphate + 2 H(+)(out). In terms of biological role, catalyzes the hydrolysis of ATP coupled with the exchange of H(+) and K(+) ions across the plasma membrane. Responsible for potassium absorption in various tissues. The polypeptide is Potassium-transporting ATPase alpha chain 2 (ATP12A) (Cavia porcellus (Guinea pig)).